The following is a 132-amino-acid chain: Sec-independent protein translocase protein TatB (132 aa).

The chain crosses the membrane as a helical span at residues 1 to 21; it reads MFDIGFWELVLISVVGLVVLG. The tract at residues 70-132 is disordered; the sequence is GMEDLSPELK…KVSAADKKAE (63 aa). Basic and acidic residues-rich tracts occupy residues 96 to 108 and 115 to 132; these read YADKAQSETETAK and SAEKVEEIKVSAADKKAE.

It belongs to the TatB family. The Tat system comprises two distinct complexes: a TatABC complex, containing multiple copies of TatA, TatB and TatC subunits, and a separate TatA complex, containing only TatA subunits. Substrates initially bind to the TatABC complex, which probably triggers association of the separate TatA complex to form the active translocon.

It is found in the cell inner membrane. Its function is as follows. Part of the twin-arginine translocation (Tat) system that transports large folded proteins containing a characteristic twin-arginine motif in their signal peptide across membranes. Together with TatC, TatB is part of a receptor directly interacting with Tat signal peptides. TatB may form an oligomeric binding site that transiently accommodates folded Tat precursor proteins before their translocation. This Vibrio parahaemolyticus serotype O3:K6 (strain RIMD 2210633) protein is Sec-independent protein translocase protein TatB.